Reading from the N-terminus, the 201-residue chain is UPF0301 protein Bpet0561 (201 aa).

It belongs to the UPF0301 (AlgH) family.

This Bordetella petrii (strain ATCC BAA-461 / DSM 12804 / CCUG 43448) protein is UPF0301 protein Bpet0561.